The primary structure comprises 193 residues: dCTP deaminase (193 aa).

DCTP is bound by residues 110 to 115 (RSSLAR), Asp128, 136 to 138 (VLE), Tyr171, Lys178, and Gln182. Catalysis depends on Glu138, which acts as the Proton donor/acceptor. Residues 170–193 (PYNSRQDAKYRGQQGAVASRIDKD) are disordered.

It belongs to the dCTP deaminase family. As to quaternary structure, homotrimer.

The enzyme catalyses dCTP + H2O + H(+) = dUTP + NH4(+). It functions in the pathway pyrimidine metabolism; dUMP biosynthesis; dUMP from dCTP (dUTP route): step 1/2. Its function is as follows. Catalyzes the deamination of dCTP to dUTP. The chain is dCTP deaminase from Yersinia enterocolitica serotype O:8 / biotype 1B (strain NCTC 13174 / 8081).